A 349-amino-acid chain; its full sequence is Small ribosomal subunit protein uS2 (349 aa).

The protein belongs to the universal ribosomal protein uS2 family.

The sequence is that of Small ribosomal subunit protein uS2 from Methylobacterium sp. (strain 4-46).